The sequence spans 408 residues: UPF0761 membrane protein azo3165 (408 aa).

Helical transmembrane passes span 29–49 (LAFT…GVFG), 92–112 (LTLI…ATIE), 131–151 (ITVS…SVVA), 172–192 (IAAA…LYYA), 197–217 (PVRL…FLLM), 220–240 (GLGL…TFAA), and 241–261 (LPIF…GALI).

It belongs to the UPF0761 family.

The protein resides in the cell inner membrane. The protein is UPF0761 membrane protein azo3165 of Azoarcus sp. (strain BH72).